A 329-amino-acid chain; its full sequence is Acetyl-coenzyme A carboxylase carboxyl transferase subunit alpha (329 aa).

A CoA carboxyltransferase C-terminal domain is found at 40-294 (QLESLASRRR…RAALERHLGE (255 aa)).

The protein belongs to the AccA family. As to quaternary structure, acetyl-CoA carboxylase is a heterohexamer composed of biotin carboxyl carrier protein (AccB), biotin carboxylase (AccC) and two subunits each of ACCase subunit alpha (AccA) and ACCase subunit beta (AccD).

The protein localises to the cytoplasm. It carries out the reaction N(6)-carboxybiotinyl-L-lysyl-[protein] + acetyl-CoA = N(6)-biotinyl-L-lysyl-[protein] + malonyl-CoA. It functions in the pathway lipid metabolism; malonyl-CoA biosynthesis; malonyl-CoA from acetyl-CoA: step 1/1. Its function is as follows. Component of the acetyl coenzyme A carboxylase (ACC) complex. First, biotin carboxylase catalyzes the carboxylation of biotin on its carrier protein (BCCP) and then the CO(2) group is transferred by the carboxyltransferase to acetyl-CoA to form malonyl-CoA. This is Acetyl-coenzyme A carboxylase carboxyl transferase subunit alpha from Synechococcus sp. (strain CC9902).